A 35-amino-acid polypeptide reads, in one-letter code: U1-theraphotoxin-Hhn1a (35 aa).

Intrachain disulfides connect C2–C16, C9–C21, and C15–C28.

It belongs to the neurotoxin 10 (Hwtx-1) family. 24 (Hwtx-6) subfamily. Expressed by the venom gland.

It is found in the secreted. In terms of biological role, gating-modifier toxin that dose-dependently inhibits inactivation of voltage-gated sodium channels and reduces the peak of sodium current in cockroach DUM neurons. In vivo, reversibly paralyzes cockroaches for several hours, paralyzes rat after intracerebroventricular injection and blocks the neuromuscular transmission of the isolated rat phrenic nerve-diaphragm preparation. The polypeptide is U1-theraphotoxin-Hhn1a (Cyriopagopus hainanus (Chinese bird spider)).